The primary structure comprises 274 residues: Large ribosomal subunit protein uL2 (274 aa).

The tract at residues 223 to 258 is disordered; sequence VAMNPVDHPHGGGEGRTSGGRHPVTPWGIPTKGYKT.

Belongs to the universal ribosomal protein uL2 family. In terms of assembly, part of the 50S ribosomal subunit. Forms a bridge to the 30S subunit in the 70S ribosome.

In terms of biological role, one of the primary rRNA binding proteins. Required for association of the 30S and 50S subunits to form the 70S ribosome, for tRNA binding and peptide bond formation. It has been suggested to have peptidyltransferase activity; this is somewhat controversial. Makes several contacts with the 16S rRNA in the 70S ribosome. This chain is Large ribosomal subunit protein uL2, found in Geotalea daltonii (strain DSM 22248 / JCM 15807 / FRC-32) (Geobacter daltonii).